Here is a 320-residue protein sequence, read N- to C-terminus: Phosphatidylserine decarboxylase proenzyme (320 aa).

Active-site charge relay system; for autoendoproteolytic cleavage activity residues include Asp90, His147, and Ser254. Ser254 acts as the Schiff-base intermediate with substrate; via pyruvic acid; for decarboxylase activity in catalysis. Ser254 carries the post-translational modification Pyruvic acid (Ser); by autocatalysis. The disordered stretch occupies residues 290–320 (TAAAEPAPLPEEEIRAEHRASPLVDDKQDQG). Over residues 301–320 (EEIRAEHRASPLVDDKQDQG) the composition is skewed to basic and acidic residues.

This sequence belongs to the phosphatidylserine decarboxylase family. PSD-B subfamily. Prokaryotic type I sub-subfamily. Heterodimer of a large membrane-associated beta subunit and a small pyruvoyl-containing alpha subunit. Pyruvate serves as cofactor. Is synthesized initially as an inactive proenzyme. Formation of the active enzyme involves a self-maturation process in which the active site pyruvoyl group is generated from an internal serine residue via an autocatalytic post-translational modification. Two non-identical subunits are generated from the proenzyme in this reaction, and the pyruvate is formed at the N-terminus of the alpha chain, which is derived from the carboxyl end of the proenzyme. The autoendoproteolytic cleavage occurs by a canonical serine protease mechanism, in which the side chain hydroxyl group of the serine supplies its oxygen atom to form the C-terminus of the beta chain, while the remainder of the serine residue undergoes an oxidative deamination to produce ammonia and the pyruvoyl prosthetic group on the alpha chain. During this reaction, the Ser that is part of the protease active site of the proenzyme becomes the pyruvoyl prosthetic group, which constitutes an essential element of the active site of the mature decarboxylase.

It is found in the cell membrane. It carries out the reaction a 1,2-diacyl-sn-glycero-3-phospho-L-serine + H(+) = a 1,2-diacyl-sn-glycero-3-phosphoethanolamine + CO2. The protein operates within phospholipid metabolism; phosphatidylethanolamine biosynthesis; phosphatidylethanolamine from CDP-diacylglycerol: step 2/2. In terms of biological role, catalyzes the formation of phosphatidylethanolamine (PtdEtn) from phosphatidylserine (PtdSer). The sequence is that of Phosphatidylserine decarboxylase proenzyme from Klebsiella pneumoniae subsp. pneumoniae (strain ATCC 700721 / MGH 78578).